A 103-amino-acid chain; its full sequence is HSQGTFTSDYSKYLDSRRAQDFVQWLMNSKRSGGISXXHADGTFTSDMSSYLEEKAAKEFVDWLIKGRPKHADGSFTSDFNKALDIKAAQEFLDWIINTPVKE.

It belongs to the glucagon family.

It localises to the secreted. Functionally, plays a key role in glucose metabolism and homeostasis. Regulates blood glucose by increasing gluconeogenesis and decreasing glycolysis. This Aquarana catesbeiana (American bullfrog) protein is Pro-glucagon (gcg).